Here is a 356-residue protein sequence, read N- to C-terminus: Heat-inducible transcription repressor HrcA (356 aa).

The protein belongs to the HrcA family.

Negative regulator of class I heat shock genes (grpE-dnaK-dnaJ and groELS operons). Prevents heat-shock induction of these operons. The polypeptide is Heat-inducible transcription repressor HrcA (Chlorobaculum tepidum (strain ATCC 49652 / DSM 12025 / NBRC 103806 / TLS) (Chlorobium tepidum)).